The following is a 347-amino-acid chain: NADH-quinone oxidoreductase subunit H 1 (347 aa).

A run of 9 helical transmembrane segments spans residues 13–33 (IIMI…IAYV), 50–70 (PNVV…KFVF), 82–102 (AVFL…WAVV), 115–135 (VGIL…IMGG), 161–181 (IGFV…TDIV), 198–218 (FLDW…ISAL), 263–283 (CALT…IWIL), 286–306 (VPGI…FAMV), and 321–341 (LGWK…AFVL).

The protein belongs to the complex I subunit 1 family. NDH-1 is composed of 14 different subunits. Subunits NuoA, H, J, K, L, M, N constitute the membrane sector of the complex.

It is found in the cell inner membrane. The catalysed reaction is a quinone + NADH + 5 H(+)(in) = a quinol + NAD(+) + 4 H(+)(out). Functionally, NDH-1 shuttles electrons from NADH, via FMN and iron-sulfur (Fe-S) centers, to quinones in the respiratory chain. The immediate electron acceptor for the enzyme in this species is believed to be ubiquinone. Couples the redox reaction to proton translocation (for every two electrons transferred, four hydrogen ions are translocated across the cytoplasmic membrane), and thus conserves the redox energy in a proton gradient. This subunit may bind ubiquinone. The polypeptide is NADH-quinone oxidoreductase subunit H 1 (Rhizobium etli (strain ATCC 51251 / DSM 11541 / JCM 21823 / NBRC 15573 / CFN 42)).